A 340-amino-acid chain; its full sequence is MDSTFTGYNLYNLQVKTEMDKLSSGLDIYRNPLKNKTEVTMFILTGFTDDFELQVFLFLLFFAIYLFTLIGNLGLVVLVIEDSWLHNPMYYFLSVLSFLDACYSTVVTPKMLVNFLAKNKSISFIGCATQMLLFVTFGTTECFLLAAMAYDHYVAIYNPLLYSVSMSPRVYVPLITASYVAGILHATIHIVATFSLSFCGSNEIRHVFCDMPPLLAISCSDTHTNQLLLFYFVGSIEIVTILIVLISCDFILLSILKMHSAKGRQKAFSTCGSHLTGVTIYHGTILVSYMRPSSSYASDHDIIVSIFYTIVIPKLNPIIYSLRNKEVKKAVKKMLKLVYK.

The Extracellular segment spans residues Met1–Val55. Asn35 carries N-linked (GlcNAc...) asparagine glycosylation. Residues Phe56 to Val76 traverse the membrane as a helical segment. The Cytoplasmic portion of the chain corresponds to Val77–Trp84. A helical membrane pass occupies residues Leu85 to Thr105. Residues Val106–Thr129 lie on the Extracellular side of the membrane. An N-linked (GlcNAc...) asparagine glycan is attached at Asn119. Cysteines 127 and 219 form a disulfide. The chain crosses the membrane as a helical span at residues Gln130–Tyr150. The Cytoplasmic segment spans residues Asp151–Arg169. A helical membrane pass occupies residues Val170–Ile190. At Val191–Gln226 the chain is on the extracellular side. The helical transmembrane segment at Leu227–Ser247 threads the bilayer. Over Cys248–Ala267 the chain is Cytoplasmic. Residues Phe268–Ser288 form a helical membrane-spanning segment. Over Tyr289–Asp301 the chain is Extracellular. A helical transmembrane segment spans residues Ile302–Leu322. The Cytoplasmic portion of the chain corresponds to Arg323–Lys340.

The protein belongs to the G-protein coupled receptor 1 family.

It is found in the cell membrane. In terms of biological role, odorant receptor. The polypeptide is Olfactory receptor 5T3 (OR5T3) (Homo sapiens (Human)).